The following is an 88-amino-acid chain: UPF0237 protein spr0217 (88 aa).

The ACT domain occupies 4–77; it reads IITVVGKDKS…QTLNVKINIQ (74 aa).

Belongs to the UPF0237 family. As to quaternary structure, homodimer.

This Streptococcus pneumoniae (strain ATCC BAA-255 / R6) protein is UPF0237 protein spr0217.